The sequence spans 199 residues: MKMNAKFISSYDDYQKCPEITKPEYAFIGRSNVGKSSLINSLTGVKNLAMTSSKPGKTQLINLFTIEETWILADLPGYGFAKASQSSRIKWGRMVHDYLKNRTNLTTVFLLVDSRHEPMKSDLEQITWLASNGIPFSLIFTKIDKQSLTQTNKILASWTKVLSENWEELPKMFLTSSESGKGTEELLTYIDEINKQIAN.

One can recognise an EngB-type G domain in the interval 21-196 (TKPEYAFIGR…LTYIDEINKQ (176 aa)). Residues 29 to 36 (GRSNVGKS), 56 to 60 (GKTQL), 74 to 77 (DLPG), 141 to 144 (TKID), and 175 to 177 (TSS) contribute to the GTP site. Mg(2+)-binding residues include S36 and T58.

This sequence belongs to the TRAFAC class TrmE-Era-EngA-EngB-Septin-like GTPase superfamily. EngB GTPase family. Requires Mg(2+) as cofactor.

Necessary for normal cell division and for the maintenance of normal septation. In Cytophaga hutchinsonii (strain ATCC 33406 / DSM 1761 / CIP 103989 / NBRC 15051 / NCIMB 9469 / D465), this protein is Probable GTP-binding protein EngB.